We begin with the raw amino-acid sequence, 288 residues long: Ankyrin repeat and SOCS box protein 8 (288 aa).

Residue S17 is modified to Phosphoserine. ANK repeat units follow at residues 52–81 (GTLKPLHCACMVSDADCVELLLEKGAEVNA), 85–113 (YNRTVLHYAAEKDEACVEVLLEYGANPNA), 117–146 (NRDTPLHWAAFKNNAECVRALLESGASVNA), and 150–179 (NNDTPLSWAAMKGNLESVSILLDYGAEVRV). The region spanning 235 to 288 (QLCEKLTVLCSAPGTLKTLARYAVRRSLGLQYLPDAVKGLPLPASLKEYLLLLE) is the SOCS box domain.

The protein belongs to the ankyrin SOCS box (ASB) family. In terms of assembly, interacts with TBK1; this interaction promotes TBK1 proteasomal degradation. Phosphorylated by TBK1.

Its subcellular location is the cytoplasm. It functions in the pathway protein modification; protein ubiquitination. Functionally, may be a substrate-recognition component of a SCF-like ECS (Elongin-Cullin-SOCS-box protein) E3 ubiquitin-protein ligase complex which mediates the ubiquitination and subsequent proteasomal degradation of target proteins. Inhibits IFN-beta production through the IRF3 signaling pathway by targeting TBK1 via 'Lys-48'-linked ubiquitination, leading to its proteasomal degradation. This Macaca fascicularis (Crab-eating macaque) protein is Ankyrin repeat and SOCS box protein 8 (ASB8).